The sequence spans 424 residues: Probable ribonuclease FAU-1 (424 aa).

It belongs to the FAU-1 family.

Functionally, probable RNase involved in rRNA stability through maturation and/or degradation of precursor rRNAs. Binds to RNA in loop regions with AU-rich sequences. The polypeptide is Probable ribonuclease FAU-1 (Saccharolobus solfataricus (strain ATCC 35092 / DSM 1617 / JCM 11322 / P2) (Sulfolobus solfataricus)).